Here is a 645-residue protein sequence, read N- to C-terminus: Sodium/hydrogen exchanger 9 (645 aa).

The Lumenal segment spans residues 1-20; sequence MERQSRVMSEKDEYQFQHQG. Residues 21 to 41 form a helical membrane-spanning segment; it reads AVELLVFNFLLILTILTIWLF. The Cytoplasmic segment spans residues 42 to 45; the sequence is KNHR. The chain crosses the membrane as a helical span at residues 46-66; the sequence is FRFLHETGGAMVYGLIMGLIL. Over 67–126 the chain is Lumenal; it reads RYATAPTDIESGTVYDCVKLTFSPSTLLVNITDQVYEYKYKREISQHNINPHQGNAILEK. N96 carries an N-linked (GlcNAc...) asparagine glycan. Residues 127-147 traverse the membrane as a helical segment; that stretch reads MTFDPEIFFNVLLPPIIFHAG. Topologically, residues 148–164 are cytoplasmic; the sequence is YSLKKRHFFQNLGSILT. Residues 165–185 traverse the membrane as a helical segment; sequence YAFLGTAISCIVIGLIMYGFV. Residues 186–203 lie on the Lumenal side of the membrane; sequence KAMIHAGQLKNGDFHFTD. The helical transmembrane segment at 204 to 224 threads the bilayer; sequence CLFFGSLMSATDPVTVLAIFH. Residues 225–235 are Cytoplasmic-facing; sequence ELHVDPDLYTL. The chain crosses the membrane as a helical span at residues 236-256; it reads LFGESVLNDAVAIVLTYSISI. At 257–277 the chain is on the lumenal side; that stretch reads YSPKENPNAFDAAAFFQSVGN. A helical transmembrane segment spans residues 278–298; the sequence is FLGIFAGSFAMGSAYAIITAL. Topologically, residues 299–301 are cytoplasmic; that stretch reads LTK. 2 helical membrane-spanning segments follow: residues 302–322 and 323–343; these read FTKLCEFPMLETGLFFLLSWS and AFLSAEAAGLTGIVAVLFCGV. The Cytoplasmic portion of the chain corresponds to 344 to 364; sequence TQAHYTYNNLSSDSKIRTKQL. The chain crosses the membrane as a helical span at residues 365-385; it reads FEFMNFLAENVIFCYMGLALF. Residue T386 is a topological domain, lumenal. The chain crosses the membrane as a helical span at residues 387-407; the sequence is FQNHIFNALFILGAFLAIFVA. Residues 408–429 lie on the Cytoplasmic side of the membrane; that stretch reads RACNIYPLSFLLNLGRKQKIPW. Residues 430–450 form a helical membrane-spanning segment; the sequence is NFQHMMMFSGLRGAIAFALAI. The Lumenal segment spans residues 451-465; sequence RNTESQPKQMMFTTT. Residues 466–486 traverse the membrane as a helical segment; that stretch reads LLLVFFTVWVFGGGTTPMLTW. Residues 487 to 645 lie on the Cytoplasmic side of the membrane; that stretch reads LQIRVGVDLD…EQTLGQSQLN (159 aa). Positions 594 to 622 are disordered; the sequence is QASSPCSPPARLGLDQKASPQTPGKENIY.

Belongs to the monovalent cation:proton antiporter 1 (CPA1) transporter (TC 2.A.36) family. In terms of assembly, homodimer; phosphatidylinositol-4,5-bisphosphate (PIP2) and phosphatidylinositol 3,4,5-trisphosphate (PIP3) could be involved in the dimer stabilization. Interacts (via the C-terminus) with RACK1. Interacts with CHP1. Ubiquitously expressed in all tissues tested. Expressed at highest levels in heart and skeletal muscle, followed by placenta, kidney, and liver. Expressed in the brain, in the medulla and spinal cord.

It is found in the late endosome membrane. Its subcellular location is the early endosome membrane. It localises to the recycling endosome membrane. The protein localises to the cell membrane. The protein resides in the cytoplasmic vesicle. It is found in the phagosome membrane. The catalysed reaction is Na(+)(in) + H(+)(out) = Na(+)(out) + H(+)(in). It carries out the reaction K(+)(in) + H(+)(out) = K(+)(out) + H(+)(in). In terms of biological role, endosomal Na(+), K(+)/H(+) antiporter. Mediates the electroneutral exchange of endosomal luminal H(+) for a cytosolic Na(+) or K(+). By facilitating proton efflux, SLC9A9 counteracts the acidity generated by vacuolar (V)-ATPase, thereby limiting luminal acidification. Regulates organellar pH and consequently, e.g., endosome maturation and endocytic trafficking of plasma membrane receptors and neurotransporters. Promotes the recycling of transferrin receptors back to the cell surface to facilitate additional iron uptake in the brain. Regulates synaptic transmission by regulating the luminal pH of axonal endosomes. Regulates phagosome lumenal pH, thus affecting phagosome maturation, and consequently, microbicidal activity in macrophages. Can also be active at the cell surface of specialized cells, e.g., in the inner ear hair bundles uses the high K(+) of the endolymph to regulate intracelular pH. This chain is Sodium/hydrogen exchanger 9, found in Homo sapiens (Human).